A 193-amino-acid polypeptide reads, in one-letter code: Probable molybdenum cofactor guanylyltransferase (193 aa).

GTP-binding positions include 9–11, lysine 21, aspartate 64, and aspartate 93; that span reads TAG. Aspartate 93 provides a ligand contact to Mg(2+).

The protein belongs to the MobA family. The cofactor is Mg(2+).

It is found in the cytoplasm. It catalyses the reaction Mo-molybdopterin + GTP + H(+) = Mo-molybdopterin guanine dinucleotide + diphosphate. Transfers a GMP moiety from GTP to Mo-molybdopterin (Mo-MPT) cofactor (Moco or molybdenum cofactor) to form Mo-molybdopterin guanine dinucleotide (Mo-MGD) cofactor. This chain is Probable molybdenum cofactor guanylyltransferase, found in Deinococcus radiodurans (strain ATCC 13939 / DSM 20539 / JCM 16871 / CCUG 27074 / LMG 4051 / NBRC 15346 / NCIMB 9279 / VKM B-1422 / R1).